Here is a 379-residue protein sequence, read N- to C-terminus: Homoserine O-succinyltransferase (379 aa).

One can recognise an AB hydrolase-1 domain in the interval 48-357; sequence NAVLICHALS…SAHGHDAFLM (310 aa). The active-site Nucleophile is the serine 154. Arginine 224 is a binding site for substrate. Residues aspartate 319 and histidine 352 contribute to the active site. Aspartate 353 serves as a coordination point for substrate.

This sequence belongs to the AB hydrolase superfamily. MetX family. In terms of assembly, homodimer.

The protein localises to the cytoplasm. It catalyses the reaction L-homoserine + succinyl-CoA = O-succinyl-L-homoserine + CoA. It participates in amino-acid biosynthesis; L-methionine biosynthesis via de novo pathway; O-succinyl-L-homoserine from L-homoserine: step 1/1. In terms of biological role, transfers a succinyl group from succinyl-CoA to L-homoserine, forming succinyl-L-homoserine. The sequence is that of Homoserine O-succinyltransferase from Neisseria meningitidis serogroup A / serotype 4A (strain DSM 15465 / Z2491).